Here is a 374-residue protein sequence, read N- to C-terminus: N5-carboxyaminoimidazole ribonucleotide synthase (374 aa).

ATP is bound by residues R108, K148, 153–159 (GYDGKGQ), 183–186 (EQFL), E191, H214, and 266–267 (NE). In terms of domain architecture, ATP-grasp spans 112–296 (KQTLQKAGSK…QFDTHILAVT (185 aa)).

It belongs to the PurK/PurT family. In terms of assembly, homodimer.

It catalyses the reaction 5-amino-1-(5-phospho-beta-D-ribosyl)imidazole + hydrogencarbonate + ATP = 5-carboxyamino-1-(5-phospho-D-ribosyl)imidazole + ADP + phosphate + 2 H(+). It participates in purine metabolism; IMP biosynthesis via de novo pathway; 5-amino-1-(5-phospho-D-ribosyl)imidazole-4-carboxylate from 5-amino-1-(5-phospho-D-ribosyl)imidazole (N5-CAIR route): step 1/2. In terms of biological role, catalyzes the ATP-dependent conversion of 5-aminoimidazole ribonucleotide (AIR) and HCO(3)(-) to N5-carboxyaminoimidazole ribonucleotide (N5-CAIR). This is N5-carboxyaminoimidazole ribonucleotide synthase from Staphylococcus haemolyticus (strain JCSC1435).